The sequence spans 181 residues: Proteinase inhibitor B (181 aa).

An N-terminal signal peptide occupies residues 1–24 (MAASNALLLISGALLISLAVLCQG). 3 disulfides stabilise this stretch: Cys-67–Cys-113, Cys-134–Cys-143, and Cys-136–Cys-139.

This sequence belongs to the protease inhibitor I3 (leguminous Kunitz-type inhibitor) family.

It is found in the secreted. Its function is as follows. Possesses two reactive sites. Inhibits two molecules of trypsin simultaneously. Inhibits efficiently kallikrein, but chymotrypsin weakly. In Sagittaria sagittifolia (Arrowhead), this protein is Proteinase inhibitor B.